The chain runs to 596 residues: Aspartate--tRNA(Asp/Asn) ligase (596 aa).

Residue glutamate 182 coordinates L-aspartate. An aspartate region spans residues 206–209 (QLFK). Arginine 228 contacts L-aspartate. ATP-binding positions include 228-230 (RDE) and glutamine 237. L-aspartate is bound at residue histidine 456. Glutamate 490 is a binding site for ATP. L-aspartate is bound at residue arginine 497. ATP is bound at residue 542–545 (GLDR).

This sequence belongs to the class-II aminoacyl-tRNA synthetase family. Type 1 subfamily. As to quaternary structure, homodimer.

The protein resides in the cytoplasm. It carries out the reaction tRNA(Asx) + L-aspartate + ATP = L-aspartyl-tRNA(Asx) + AMP + diphosphate. Aspartyl-tRNA synthetase with relaxed tRNA specificity since it is able to aspartylate not only its cognate tRNA(Asp) but also tRNA(Asn). Reaction proceeds in two steps: L-aspartate is first activated by ATP to form Asp-AMP and then transferred to the acceptor end of tRNA(Asp/Asn). In Syntrophotalea carbinolica (strain DSM 2380 / NBRC 103641 / GraBd1) (Pelobacter carbinolicus), this protein is Aspartate--tRNA(Asp/Asn) ligase.